A 960-amino-acid chain; its full sequence is Phosphoenolpyruvate carboxylase 2 (960 aa).

Residues His-167 and Lys-595 contribute to the active site.

This sequence belongs to the PEPCase type 1 family. In terms of assembly, homotetramer. Mg(2+) serves as cofactor.

It is found in the cytoplasm. The enzyme catalyses oxaloacetate + phosphate = phosphoenolpyruvate + hydrogencarbonate. Its pathway is photosynthesis; C3 acid pathway. Its function is as follows. Through the carboxylation of phosphoenolpyruvate (PEP) it forms oxaloacetate, a four-carbon dicarboxylic acid source for the tricarboxylic acid cycle. The sequence is that of Phosphoenolpyruvate carboxylase 2 from Sorghum bicolor (Sorghum).